A 670-amino-acid polypeptide reads, in one-letter code: Transcriptional regulatory protein DOT6 (670 aa).

A compositionally biased stretch (polar residues) spans 1–44 (MSISTSLNSASIHLSSMDTHPQLHSLTRQPHSSSTAMSKNEAQE). A disordered region spans residues 1–78 (MSISTSLNSA…SKNPSSWDPQ (78 aa)). The segment covering 45 to 74 (SSPSLPASSSSSTSASASASSKNSSKNPSS) has biased composition (low complexity). Residues 67–121 (NSSKNPSSWDPQDDLLLRHLKEVKKMGWKDISQYFPNRTPNACQFRWRRLKSGNL) form the HTH myb-type domain. Positions 94 to 117 (WKDISQYFPNRTPNACQFRWRRLK) form a DNA-binding region, H-T-H motif. Over residues 226 to 242 (HHPHQHLHHHPHHKTLK) the composition is skewed to basic residues. Disordered regions lie at residues 226-250 (HHPH…SHSF), 293-332 (TTPS…NTSR), 406-436 (HSSS…CNPT), and 483-659 (ADML…NSPL). Residues serine 245 and serine 247 each carry the phosphoserine modification. 2 stretches are compositionally biased toward low complexity: residues 295–307 (PSSP…LLSS) and 316–332 (NWSR…NTSR). Residues 425–436 (SGHSMKSSCNPT) show a composition bias toward polar residues. Serine 487 is modified (phosphoserine). At threonine 489 the chain carries Phosphothreonine. Residue serine 491 is modified to Phosphoserine. A compositionally biased stretch (basic and acidic residues) spans 512-522 (DDDKGSDKEDV). Low complexity-rich tracts occupy residues 544 to 561 (SSNK…SSKD) and 587 to 598 (TITSDTSSSAAT). Residues 599 to 608 (MNRTPNSKNP) are compositionally biased toward polar residues. Low complexity predominate over residues 622–659 (ITPRPKPSSTTTSITTETTNNMINHSSSTTTTTNNSPL).

This sequence belongs to the DOT6 family. In terms of assembly, component of the RPD3C(L) complex composed of at least ASH1, CTI6, DEP1, DOT6, PHO23, RPD3, RXT2, RXT3, SAP30, SDS3, SIN3, TOD6; UME1 and UME6.

It is found in the nucleus. Component of the RPD3 histone deacetylase complex RPD3C(L) responsible for the deacetylation of lysine residues on the N-terminal part of the core histones (H2A, H2B, H3 and H4). Histone deacetylation gives a tag for epigenetic repression and plays an important role in transcriptional regulation, cell cycle progression and developmental events. DOT6 binds to sequences containing the core CGATG, which resembles the PAC (Polymerase A and C) motif. The chain is Transcriptional regulatory protein DOT6 (DOT6) from Saccharomyces cerevisiae (strain ATCC 204508 / S288c) (Baker's yeast).